The following is a 100-amino-acid chain: Small ribosomal subunit protein bS21 (100 aa).

Positions 61-100 are disordered; it reads KLQREGLLPMKPKPVFGAGPGGDRGRGPAAGAGAGPRGPR. Residues 78-100 are compositionally biased toward gly residues; it reads AGPGGDRGRGPAAGAGAGPRGPR.

It belongs to the bacterial ribosomal protein bS21 family.

The polypeptide is Small ribosomal subunit protein bS21 (Rhodopseudomonas palustris (strain BisB18)).